Consider the following 470-residue polypeptide: Fumarate hydratase class II (470 aa).

Residues serine 99–threonine 101, histidine 129–aspartate 132, serine 139–asparagine 141, and threonine 187 contribute to the substrate site. Histidine 188 (proton donor/acceptor) is an active-site residue. Serine 318 is an active-site residue. Residues serine 319 and lysine 324–asparagine 326 contribute to the substrate site.

This sequence belongs to the class-II fumarase/aspartase family. Fumarase subfamily. In terms of assembly, homotetramer.

The protein resides in the cytoplasm. The catalysed reaction is (S)-malate = fumarate + H2O. Its pathway is carbohydrate metabolism; tricarboxylic acid cycle; (S)-malate from fumarate: step 1/1. In terms of biological role, involved in the TCA cycle. Catalyzes the stereospecific interconversion of fumarate to L-malate. This chain is Fumarate hydratase class II, found in Halobacterium salinarum (strain ATCC 700922 / JCM 11081 / NRC-1) (Halobacterium halobium).